The chain runs to 467 residues: Asparagine--tRNA ligase (467 aa).

The protein belongs to the class-II aminoacyl-tRNA synthetase family. Homodimer.

It is found in the cytoplasm. It carries out the reaction tRNA(Asn) + L-asparagine + ATP = L-asparaginyl-tRNA(Asn) + AMP + diphosphate + H(+). This chain is Asparagine--tRNA ligase, found in Legionella pneumophila (strain Corby).